We begin with the raw amino-acid sequence, 468 residues long: 3-isopropylmalate dehydratase large subunit (468 aa).

C347, C407, and C410 together coordinate [4Fe-4S] cluster.

The protein belongs to the aconitase/IPM isomerase family. LeuC type 1 subfamily. As to quaternary structure, heterodimer of LeuC and LeuD. The cofactor is [4Fe-4S] cluster.

The enzyme catalyses (2R,3S)-3-isopropylmalate = (2S)-2-isopropylmalate. The protein operates within amino-acid biosynthesis; L-leucine biosynthesis; L-leucine from 3-methyl-2-oxobutanoate: step 2/4. In terms of biological role, catalyzes the isomerization between 2-isopropylmalate and 3-isopropylmalate, via the formation of 2-isopropylmaleate. The chain is 3-isopropylmalate dehydratase large subunit from Glaesserella parasuis serovar 5 (strain SH0165) (Haemophilus parasuis).